A 946-amino-acid polypeptide reads, in one-letter code: MQRLACVLIWLFLLEEQAFEIPANEYSEFAGYSNLVELAPDKFPFVQENRRYQRSLPEESGEMTDNVDQVTLYSYKVQSTITSRMATTIIQSKLVNNSPQSQNVVFDVQIPKGAFISNFTMTVNGITFTSTIREKTVGRALYSQARAKGKTAGWVRSRTLDMENFNTEVNIPPGAKVQFELHYQEMKWRKLGSYEHKIHLQPGRLAKHLEVNVWIVELQGMRFLHVPDTFEGHFQGVPVISKGQKKSHVSFKPTVAQQRKCPNCTYTAVDGELVVMYDVNREEKVGELEVFNGYFVHFFAPENLDPIPKNILFVIDVSGSMWGIKMKQTVEAMKTILDDLRTEDQFSVVDFNHNVRTWRNDLVSATKTQITDAKRYIEKIQPSGGTNINEALLRAIFILNEASNLGMLNPDSVSLIVLVSDGDPTVGELKLSKIQKNVKQNIQDNISLFSLGIGFDVDYDFLKRLSNENRGIAQRIYGNRDTSSQLKKFYNQVSTPLLRNVQFNYPQASVTDVTQNSFHNYFGGSEIVVAGKYDPSKLAEVQSIITATSTNTELVLETLSQMDDLEDFLSKDKHADPNFTKKLWAYLTINQLLAERSLAPTAAIKRKITKTILQMSLDHHIVTPLTAMVIENEAGDERMLADSPPQDHSCCSGALYYGTKVASASIPSWASPSPTPVMAMLAVGANRLESTPPPHVIRVENDPHFIIYLPKSQKNICFNIDSEPGKILSLVSDPESGILVNGQLIGAKKAENGKLRTYFGKLGFYFQKEDMKIEISTENITLINGSSTTSLFWSDTAHLGNQRVLISVKKGKSVTLTLNKEMFFSVLLHHVWKKHPVNVDFLGIYLPPTNKFSPSAHGLLGQFMNKPNIHIFNERPGKDPEKPEASMEVKGHKLTVTRGLQKDYRTDIAFGTDVPCWFVHNSGKGFIDGHYKDYLVPQLYSFLKRP.

Positions 1 to 18 (MQRLACVLIWLFLLEEQA) are cleaved as a signal peptide. The propeptide occupies 19-54 (FEIPANEYSEFAGYSNLVELAPDKFPFVQENRRYQR). In terms of domain architecture, VIT spans 56–185 (LPEESGEMTD…KVQFELHYQE (130 aa)). Residue serine 60 is modified to Phosphoserine. Residues asparagine 118 and asparagine 263 are each glycosylated (N-linked (GlcNAc...) asparagine). 4-carboxyglutamate occurs at positions 282 and 283. Residues 308–468 (PKNILFVIDV…YDFLKRLSNE (161 aa)) enclose the VWFA domain. An N-linked (GlcNAc...) asparagine glycan is attached at asparagine 445. Phosphoserine is present on serine 466. Residue asparagine 578 is glycosylated (N-linked (GlcNAc...) asparagine). Aspartate 702 carries the aspartate 1-(chondroitin 4-sulfate)-ester modification. Positions 703–946 (PHFIIYLPKS…PQLYSFLKRP (244 aa)) are excised as a propeptide. Serine 886 carries the post-translational modification Phosphoserine.

It belongs to the ITIH family. In terms of assembly, I-alpha-I plasma protease inhibitors are assembled from one or two heavy chains (HC) and one light chain, bikunin. Inter-alpha-inhibitor (I-alpha-I) is composed of ITIH1/HC1, ITIH2/HC2 and bikunin. Post-translationally, heavy chains are linked to bikunin via chondroitin 4-sulfate esterified to the alpha-carboxyl of the C-terminal aspartate after propeptide cleavage. In terms of processing, phosphorylated by FAM20C in the extracellular medium.

It localises to the secreted. Functionally, may act as a carrier of hyaluronan in serum or as a binding protein between hyaluronan and other matrix protein, including those on cell surfaces in tissues to regulate the localization, synthesis and degradation of hyaluronan which are essential to cells undergoing biological processes. The sequence is that of Inter-alpha-trypsin inhibitor heavy chain H2 (ITIH2) from Mesocricetus auratus (Golden hamster).